The chain runs to 163 residues: Protein-export protein SecB (163 aa).

The protein belongs to the SecB family. As to quaternary structure, homotetramer, a dimer of dimers. One homotetramer interacts with 1 SecA dimer.

It localises to the cytoplasm. Its function is as follows. One of the proteins required for the normal export of preproteins out of the cell cytoplasm. It is a molecular chaperone that binds to a subset of precursor proteins, maintaining them in a translocation-competent state. It also specifically binds to its receptor SecA. This is Protein-export protein SecB from Brucella abortus (strain S19).